The sequence spans 298 residues: Bifunctional protein FolD (298 aa).

Residues 166-168 (GRS), Ser191, and Ile232 contribute to the NADP(+) site.

The protein belongs to the tetrahydrofolate dehydrogenase/cyclohydrolase family. Homodimer.

It carries out the reaction (6R)-5,10-methylene-5,6,7,8-tetrahydrofolate + NADP(+) = (6R)-5,10-methenyltetrahydrofolate + NADPH. The enzyme catalyses (6R)-5,10-methenyltetrahydrofolate + H2O = (6R)-10-formyltetrahydrofolate + H(+). It functions in the pathway one-carbon metabolism; tetrahydrofolate interconversion. Its function is as follows. Catalyzes the oxidation of 5,10-methylenetetrahydrofolate to 5,10-methenyltetrahydrofolate and then the hydrolysis of 5,10-methenyltetrahydrofolate to 10-formyltetrahydrofolate. The sequence is that of Bifunctional protein FolD from Maricaulis maris (strain MCS10) (Caulobacter maris).